The sequence spans 202 residues: B-cell CLL/lymphoma 7 protein family member B (202 aa).

Residues 53–202 (DSKEKEKSKS…PAVPQTASES (150 aa)) form a disordered region. Residues 90–99 (ENSNQSSVSD) are compositionally biased toward polar residues. Residues 107–123 (SSTNSSPSPQQSESLSP) are compositionally biased toward low complexity. A phosphoserine mark is found at Ser114, Ser118, Ser120, Ser122, Ser127, Ser148, and Ser152.

Belongs to the BCL7 family.

Its function is as follows. Positive regulator of apoptosis. Plays a role in the Wnt signaling pathway, negatively regulating the expression of Wnt signaling components CTNNB1 and HMGA1. Involved in cell cycle progression, maintenance of the nuclear structure and stem cell differentiation. May play a role in lung tumor development or progression. This Bos taurus (Bovine) protein is B-cell CLL/lymphoma 7 protein family member B (BCL7B).